The following is a 355-amino-acid chain: Uroporphyrinogen decarboxylase (355 aa).

Substrate is bound by residues 27–31 (RQAGR), aspartate 77, tyrosine 154, threonine 209, and histidine 328.

It belongs to the uroporphyrinogen decarboxylase family. Homodimer.

The protein resides in the cytoplasm. It catalyses the reaction uroporphyrinogen III + 4 H(+) = coproporphyrinogen III + 4 CO2. Its pathway is porphyrin-containing compound metabolism; protoporphyrin-IX biosynthesis; coproporphyrinogen-III from 5-aminolevulinate: step 4/4. Functionally, catalyzes the decarboxylation of four acetate groups of uroporphyrinogen-III to yield coproporphyrinogen-III. This is Uroporphyrinogen decarboxylase from Vibrio cholerae serotype O1 (strain ATCC 39541 / Classical Ogawa 395 / O395).